Here is a 257-residue protein sequence, read N- to C-terminus: Transcription factor GHD7 (257 aa).

Residue serine 68 is modified to Phosphoserine; by CK1. The CCT domain occupies 190–232; sequence REAKLMRYKEKRKKRCYEKQIRYASRKAYAEMRPRVRGRFAKE. The Nuclear localization signal signature appears at 198 to 204; that stretch reads KEKRKKR. The disordered stretch occupies residues 226–245; it reads RGRFAKEPDQEAVAPPSTYV.

As to quaternary structure, interacts with HD16/EL1. Phosphorylated at Ser-68 by HD16/EL1, a casein kinase 1. Expressed in the apical meristem, developing leaves, leaf sheaths of young seedling, root meristem, epidermal layer of developing stems and branch-primordia of developing panicles.

The protein resides in the nucleus. Functionally, probable transcription factor involved in the regulation of flowering time under long day (LD) conditions. Plays a major role as repressor of flowering. Controls flowering time by negatively regulating the expression of EHD1 and HD3A. This chain is Transcription factor GHD7, found in Oryza sativa subsp. japonica (Rice).